The primary structure comprises 710 residues: Dendrin (710 aa).

Disordered stretches follow at residues 1–22, 62–195, 213–274, and 324–375; these read MLDG…DEES, WARG…PWGG, AGTA…KRLD, and GLNS…GKEG. Positions 103–134 form a coiled coil; sequence AEVRAREQEKRKAASQEREAKETERKRRKAGG. Basic and acidic residues predominate over residues 105 to 127; that stretch reads VRAREQEKRKAASQEREAKETER. The interval 113 to 131 is nuclear localization; sequence RKAASQEREAKETERKRRK. Residues 186-236 are interaction with MAGI2; it reads GVAWAGPWGGRRPGPPSYEAHLLLRGSAGTAPRRRWDRPPPYVAPPSYEGP. Over residues 265 to 274 the composition is skewed to basic and acidic residues; sequence EGGRTKKRLD. Residues 341 to 435 form an interaction with ACTN1 region; sequence PGTDAALSRS…LEVWKVTRRA (95 aa). Over residues 360 to 370 the composition is skewed to basic residues; the sequence is PRSRQHLRGSR. Phosphoserine is present on serine 388. 3 disordered regions span residues 390-422, 469-508, and 521-710; these read KKPP…EGAE, PRTQ…ANPS, and NQPS…RERE. Residues 407-708 form an interaction with CD2AP and NPHS1 region; it reads GGTGWKESLG…TRKTPQGNRE (302 aa). Positions 469–491 are enriched in polar residues; it reads PRTQQGQLVPSGESCSVSDSLSQ. Over residues 693–710 the composition is skewed to basic and acidic residues; it reads GFIREDTRKTPQGNRERE.

As to quaternary structure, forms a ternary complex with MAGI2 and SH3KBP1; recruits DDN to the cytoplasm. Interacts with MAGI1. Interacts with ACTN1 and may interact with WWC1. Interacts with the podocyte slit diaphragm proteins CD2AP, NPHS1 and NPHS2; the interaction with CD2AP and NPHS1 is direct. In terms of tissue distribution, two forms of 81 kDa and 89 kDa are expressed in brain. The 81 kDa form is the only one found in kidney podocytes.

The protein resides in the cell projection. The protein localises to the dendritic spine membrane. Its subcellular location is the cytoplasm. It localises to the endoplasmic reticulum membrane. It is found in the perikaryon. The protein resides in the nucleus. Promotes apoptosis of kidney glomerular podocytes. Podocytes are highly specialized cells essential to the ultrafiltration of blood, resulting in the extraction of urine and the retention of protein. This is Dendrin (Ddn) from Mus musculus (Mouse).